Here is a 303-residue protein sequence, read N- to C-terminus: Coenzyme PQQ synthesis protein B (303 aa).

The protein belongs to the PqqB family.

It functions in the pathway cofactor biosynthesis; pyrroloquinoline quinone biosynthesis. Functionally, may be involved in the transport of PQQ or its precursor to the periplasm. The sequence is that of Coenzyme PQQ synthesis protein B from Pseudomonas putida (strain ATCC 47054 / DSM 6125 / CFBP 8728 / NCIMB 11950 / KT2440).